The sequence spans 505 residues: AMP phosphorylase (505 aa).

AMP contacts are provided by residues Gly-170, 196 to 201 (SRAITS), and Thr-205. The active-site Proton donor is Asp-258. Positions 266 and 290 each coordinate AMP.

This sequence belongs to the thymidine/pyrimidine-nucleoside phosphorylase family. Type 2 subfamily.

The enzyme catalyses AMP + phosphate = alpha-D-ribose 1,5-bisphosphate + adenine. It catalyses the reaction CMP + phosphate = cytosine + alpha-D-ribose 1,5-bisphosphate. The catalysed reaction is UMP + phosphate = alpha-D-ribose 1,5-bisphosphate + uracil. In terms of biological role, catalyzes the conversion of AMP and phosphate to adenine and ribose 1,5-bisphosphate (R15P). Exhibits phosphorylase activity toward CMP and UMP in addition to AMP. Functions in an archaeal AMP degradation pathway, together with R15P isomerase and RubisCO. This is AMP phosphorylase from Methanococcus vannielii (strain ATCC 35089 / DSM 1224 / JCM 13029 / OCM 148 / SB).